Reading from the N-terminus, the 91-residue chain is uncharacterized protein (91 aa).

A helical membrane pass occupies residues 7 to 23; it reads IALVGVVVVLFGALRYQ.

Its subcellular location is the membrane. This is an uncharacterized protein from Haemophilus influenzae (strain ATCC 51907 / DSM 11121 / KW20 / Rd).